Consider the following 576-residue polypeptide: Low-affinity glucose transporter HXT4 (576 aa).

The disordered stretch occupies residues 1 to 56; the sequence is MSEEAAYQEDTAVQNTPADALSPVESDSNSALSTPSNKAERDDMKDFDENHEESNN. The Cytoplasmic segment spans residues 1–66; it reads MSEEAAYQED…YVEIPKKPAS (66 aa). The segment covering 25–37 has biased composition (polar residues); that stretch reads ESDSNSALSTPSN. The segment covering 38–54 has biased composition (basic and acidic residues); that stretch reads KAERDDMKDFDENHEES. Lys45 participates in a covalent cross-link: Glycyl lysine isopeptide (Lys-Gly) (interchain with G-Cter in ubiquitin). The chain crosses the membrane as a helical span at residues 67 to 87; it reads AYVTVSICCLMVAFGGFVFGW. The Extracellular portion of the chain corresponds to 88 to 122; that stretch reads DTGTISGFVAQTDFIRRFGMKHHDGTYYLSKVRTG. A helical transmembrane segment spans residues 123-143; that stretch reads LMVSIINIGCAIGGIILAKLG. At 144–149 the chain is on the cytoplasmic side; the sequence is DMYGRK. Residues 150-170 form a helical membrane-spanning segment; it reads MGLIVVVVIYIIGIIIQIASI. Residues 171-180 lie on the Extracellular side of the membrane; the sequence is NKWYQYFIGR. A helical membrane pass occupies residues 181–201; that stretch reads IISGLGVGGIAVLSPMLISEV. Over 202 to 207 the chain is Cytoplasmic; it reads SPKHIR. Residues 208–228 form a helical membrane-spanning segment; sequence GTLVSCYQLMITLGIFLGYCT. At 229-242 the chain is on the extracellular side; that stretch reads NYGTKTYTNSVQWR. The helical transmembrane segment at 243–263 threads the bilayer; sequence VPLGLGFAWALFMIGGMTFVP. Residues 264-346 lie on the Cytoplasmic side of the membrane; it reads ESPRYLVEVG…IQSLQQLTGD (83 aa). Residues 347 to 363 traverse the membrane as a helical segment; the sequence is NYFFYYGTTVFTAVGLS. Over 364-369 the chain is Extracellular; sequence DSFETS. The helical transmembrane segment at 370 to 387 threads the bilayer; it reads IVLGIVNFASTFVGIFLV. The Cytoplasmic portion of the chain corresponds to 388-394; it reads ERYGRRR. Residues 395-415 form a helical membrane-spanning segment; sequence CLLWGAASMTACMVVFASVGV. Residues 416-437 lie on the Extracellular side of the membrane; sequence TRLWPNGKKNGSSKGAGNCMIV. An N-linked (GlcNAc...) asparagine glycan is attached at Asn425. The helical transmembrane segment at 438-458 threads the bilayer; sequence FTCFYLFCFATTWAPIPFVVN. The Cytoplasmic segment spans residues 459 to 475; that stretch reads SETFPLRVKSKCMAIAQ. Residues 476 to 496 traverse the membrane as a helical segment; sequence ACNWIWGFLIGFFTPFISNAI. A topological domain (extracellular) is located at residue Asp497. The chain crosses the membrane as a helical span at residues 498–518; sequence FYYGYVFMGCLVFSYFYVFFF. The Cytoplasmic segment spans residues 519 to 576; the sequence is VPETKGLTLEEVNTLWEEGVLPWKSPSWVPPNKRGTDYNADDLMHDDQPFYKKMFGKK.

Belongs to the major facilitator superfamily. Sugar transporter (TC 2.A.1.1) family.

The protein localises to the cell membrane. With respect to regulation, xylose uptake is strongly inhibited by glucose. Its function is as follows. Low-affinity glucose transporter. Can also transport xylose. The protein is Low-affinity glucose transporter HXT4 (HXT4) of Saccharomyces cerevisiae (strain JAY291) (Baker's yeast).